The chain runs to 562 residues: NAD-dependent malic enzyme (562 aa).

Tyr101 functions as the Proton donor in the catalytic mechanism. Arg154 lines the NAD(+) pocket. Residue Lys172 is the Proton acceptor of the active site. A divalent metal cation is bound by residues Glu243, Asp244, and Asp267. Residues Asp267 and Asn415 each coordinate NAD(+).

The protein belongs to the malic enzymes family. In terms of assembly, homotetramer. Requires Mg(2+) as cofactor. The cofactor is Mn(2+).

It catalyses the reaction (S)-malate + NAD(+) = pyruvate + CO2 + NADH. The catalysed reaction is oxaloacetate + H(+) = pyruvate + CO2. The chain is NAD-dependent malic enzyme from Aliivibrio fischeri (strain MJ11) (Vibrio fischeri).